A 345-amino-acid polypeptide reads, in one-letter code: Flotillin-like protein FloA 1 (345 aa).

Residues 26–46 (LLLLVGVFLALFFAAVLGFFF) traverse the membrane as a helical segment.

It belongs to the flotillin-like FloA family. Homooligomerizes.

The protein localises to the cell membrane. Its subcellular location is the membrane raft. In terms of biological role, found in functional membrane microdomains (FMM) that may be equivalent to eukaryotic membrane rafts. FMMs are highly dynamic and increase in number as cells age. Flotillins are thought to be important factors in membrane fluidity. The polypeptide is Flotillin-like protein FloA 1 (Rhodopirellula baltica (strain DSM 10527 / NCIMB 13988 / SH1)).